The sequence spans 993 residues: DNA double-strand break repair Rad50 ATPase (993 aa).

Residues Arg-12, 32 to 38, and Gln-133 each bind ATP; that span reads NGSGKSS. Coiled coils occupy residues 192–222 and 402–493; these read LENL…LEKL and EELK…LEKT. The region spanning 452–556 is the Zinc-hook domain; sequence ENELKEKYED…KLNEIDSFKL (105 aa). Zn(2+)-binding residues include Cys-497 and Cys-500. Coiled coils occupy residues 570 to 612, 646 to 677, and 702 to 731; these read KVEE…LEND, DSSK…EINL, and ETEK…VLKN.

It belongs to the SMC family. RAD50 subfamily. Homodimer. Forms a heterotetramer composed of two Mre11 subunits and two Rad50 subunits. Zn(2+) is required as a cofactor.

Part of the Rad50/Mre11 complex, which is involved in the early steps of DNA double-strand break (DSB) repair. The complex may facilitate opening of the processed DNA ends to aid in the recruitment of HerA and NurA. Rad50 controls the balance between DNA end bridging and DNA resection via ATP-dependent structural rearrangements of the Rad50/Mre11 complex. The protein is DNA double-strand break repair Rad50 ATPase of Methanococcus maripaludis (strain DSM 14266 / JCM 13030 / NBRC 101832 / S2 / LL).